The sequence spans 376 residues: Enoyl-[acyl-carrier-protein] reductase, mitochondrial (376 aa).

Catalysis depends on Tyr72, which acts as the Proton donor. Residues Asn154, 182–185 (TSAV), 205–207 (RDR), 280–283 (YGGM), 305–307 (YWI), and Lys369 each bind NADP(+).

It belongs to the zinc-containing alcohol dehydrogenase family. Quinone oxidoreductase subfamily. In terms of assembly, homodimer.

The protein localises to the mitochondrion matrix. The enzyme catalyses a 2,3-saturated acyl-[ACP] + NADP(+) = a (2E)-enoyl-[ACP] + NADPH + H(+). In terms of biological role, catalyzes the NADPH-dependent reduction of trans-2-enoyl thioesters in mitochondrial fatty acid synthesis (fatty acid synthesis type II). Fatty acid chain elongation in mitochondria uses acyl carrier protein (ACP) as an acyl group carrier, but the enzyme accepts both ACP and CoA thioesters as substrates in vitro. Required for respiration and the maintenance of the mitochondrial compartment. This chain is Enoyl-[acyl-carrier-protein] reductase, mitochondrial (ETR1), found in Eremothecium gossypii (strain ATCC 10895 / CBS 109.51 / FGSC 9923 / NRRL Y-1056) (Yeast).